A 609-amino-acid chain; its full sequence is Probable G-protein coupled receptor 153 (609 aa).

Topologically, residues 1 to 11 (MSDERRLPGSA) are extracellular. Residues 12–32 (VGWLVCGGLSLLANAWGILSV) form a helical membrane-spanning segment. At 33 to 41 (GAKQKKWKP) the chain is on the cytoplasmic side. Residues 42 to 62 (LEFLLCTLAATHMLNVAVPIA) form a helical membrane-spanning segment. The Extracellular segment spans residues 63-84 (TYSVVQLRRQRPDFEWNEGLCK). Residues 85–105 (VFVSTFYTLTLATCFSVTSLS) form a helical membrane-spanning segment. Topologically, residues 106–126 (YHRMWMVCWPVNYRLSNAKKQ) are cytoplasmic. The helical transmembrane segment at 127-147 (AVHTVMGIWMVSFILSALPAV) threads the bilayer. Over 148–175 (GWHDTSERFYTHGCRFIVAEIGLGFGVC) the chain is Extracellular. The helical transmembrane segment at 176-196 (FLLLVGGSVAMGVICTAIALF) threads the bilayer. At 197-243 (QTLAVQVGRQADRRAFTVPTIVVEDAQGKRRSSIDGSEPAKTSLQTT) the chain is on the cytoplasmic side. The chain crosses the membrane as a helical span at residues 244-264 (GLVTTIVFIYDCLMGFPVLVV). Over 265–276 (SFSSLRADASAP) the chain is Extracellular. A helical membrane pass occupies residues 277 to 297 (WMALCVLWCSVAQALLLPVFL). Residues 298–609 (WACDRYRADL…LHSDSLGSAS (312 aa)) lie on the Cytoplasmic side of the membrane. Disordered regions lie at residues 446–496 (DAPP…SASA) and 514–609 (ALRR…GSAS). 2 stretches are compositionally biased toward low complexity: residues 458–479 (ESLL…RDSP) and 527–536 (AAPDGADPGE). A compositionally biased stretch (gly residues) spans 571–583 (EPGGLRAAGGGGS). Low complexity predominate over residues 584–596 (TSSFLSSPSESSG).

This sequence belongs to the G-protein coupled receptor 1 family.

Its subcellular location is the cell membrane. In terms of biological role, orphan receptor. This is Probable G-protein coupled receptor 153 (GPR153) from Homo sapiens (Human).